The chain runs to 735 residues: FHF complex subunit HOOK-interacting protein 2B (735 aa).

A disordered region spans residues 183–229 (SSSTSDEAAEKDCSGSSSPERASSPSSSSSACSLLSRSGAHPVSSPQ). Low complexity predominate over residues 196 to 221 (SGSSSPERASSPSSSSSACSLLSRSG).

It belongs to the FHIP family.

The protein is FHF complex subunit HOOK-interacting protein 2B (fhip2b) of Danio rerio (Zebrafish).